We begin with the raw amino-acid sequence, 215 residues long: Protein-L-isoaspartate O-methyltransferase (215 aa).

Ser-62 is a catalytic residue.

The protein belongs to the methyltransferase superfamily. L-isoaspartyl/D-aspartyl protein methyltransferase family.

It is found in the cytoplasm. The enzyme catalyses [protein]-L-isoaspartate + S-adenosyl-L-methionine = [protein]-L-isoaspartate alpha-methyl ester + S-adenosyl-L-homocysteine. Functionally, catalyzes the methyl esterification of L-isoaspartyl residues in peptides and proteins that result from spontaneous decomposition of normal L-aspartyl and L-asparaginyl residues. It plays a role in the repair and/or degradation of damaged proteins. The chain is Protein-L-isoaspartate O-methyltransferase from Rhodopseudomonas palustris (strain BisA53).